We begin with the raw amino-acid sequence, 326 residues long: GTP cyclohydrolase MptA (326 aa).

This sequence belongs to the GTP cyclohydrolase IV family. Homodimer. It depends on Fe(2+) as a cofactor.

The enzyme catalyses GTP + H2O = 7,8-dihydroneopterin 2',3'-cyclic phosphate + formate + diphosphate + H(+). It functions in the pathway cofactor biosynthesis; 5,6,7,8-tetrahydromethanopterin biosynthesis. Its function is as follows. Converts GTP to 7,8-dihydro-D-neopterin 2',3'-cyclic phosphate, the first intermediate in the biosynthesis of coenzyme methanopterin. The sequence is that of GTP cyclohydrolase MptA from Methanoregula boonei (strain DSM 21154 / JCM 14090 / 6A8).